Reading from the N-terminus, the 1172-residue chain is Serine/threonine-protein kinase Nek10 (1172 aa).

The ARM repeat unit spans residues 209–251; the sequence is GAHKTLVNLLGARDTNVLLGSLLALASLAESQECREKISELNI. Residues 481–514 are a coiled coil; that stretch reads YEELVSKLNLLVEDELKQIAENIESINQNKAPLK. Positions 519-712 constitute a Protein kinase domain; sequence YAILDHLGSG…SEPYGEKADV (194 aa). Residues 525–533 and Lys548 each bind ATP; that span reads LGSGAFGCV. Asp655 functions as the Proton acceptor in the catalytic mechanism. 2 disordered regions span residues 855–875 and 898–954; these read SELS…YGKD and TYSE…GSRP. Polar residues predominate over residues 919–945; that stretch reads PLKESTFNILKRSFSASGGERQSQTRD.

The protein belongs to the protein kinase superfamily. NEK Ser/Thr protein kinase family. NIMA subfamily. In terms of assembly, interacts with RAF1 and MAP2K1; the interaction is direct with RAF1 and required for ERK1/2-signaling pathway activation in response to UV irradiation. Mg(2+) serves as cofactor. As to expression, expressed in the lung.

The catalysed reaction is L-seryl-[protein] + ATP = O-phospho-L-seryl-[protein] + ADP + H(+). It catalyses the reaction L-threonyl-[protein] + ATP = O-phospho-L-threonyl-[protein] + ADP + H(+). Its function is as follows. Plays a role in the cellular response to UV irradiation. Mediates G2/M cell cycle arrest, MEK autoactivation and ERK1/2-signaling pathway activation in response to UV irradiation. In ciliated cells of airways, it is involved in the regulation of mucociliary transport. This chain is Serine/threonine-protein kinase Nek10, found in Homo sapiens (Human).